A 93-amino-acid polypeptide reads, in one-letter code: UPF0358 protein OB1428 (93 aa).

Belongs to the UPF0358 family.

This Oceanobacillus iheyensis (strain DSM 14371 / CIP 107618 / JCM 11309 / KCTC 3954 / HTE831) protein is UPF0358 protein OB1428.